Consider the following 164-residue polypeptide: Osteocalcin 2b (164 aa).

Positions 1–18 (MKSLTLLTICAVLSVSLS) are cleaved as a signal peptide. A propeptide spanning residues 19–115 (MNDLALDVVL…LASVLLRRKR (97 aa)) is cleaved from the precursor. A compositionally biased stretch (low complexity) spans 30–95 (PDPAAEPAPA…EAMAEDPAAA (66 aa)). Residues 30-99 (PDPAAEPAPA…EDPAAATEPE (70 aa)) form a disordered region. The Gla domain occupies 128–160 (QVESLSEVCELNLACEHMAETAGIVAAYTAYYG). Glu130, Glu134, and Glu137 together coordinate Ca(2+). Residues Glu130, Glu134, and Glu137 each carry the 4-carboxyglutamate modification. A disulfide bridge links Cys136 with Cys142.

Belongs to the osteocalcin/matrix Gla protein family. Gamma-carboxyglutamate residues are formed by vitamin K dependent carboxylation. These residues are essential for the binding of calcium.

It is found in the secreted. Functionally, binds strongly to apatite and calcium. The chain is Osteocalcin 2b from Oncorhynchus mykiss (Rainbow trout).